The chain runs to 205 residues: uncharacterized protein (205 aa).

This is an uncharacterized protein from Orgyia pseudotsugata (Douglas-fir tussock moth).